We begin with the raw amino-acid sequence, 607 residues long: Elongation factor 4 (607 aa).

The tr-type G domain maps to 11–193 (SKIRNFSIIA…QIVEKVPAPT (183 aa)). GTP is bound by residues 23-28 (DHGKST) and 140-143 (NKID).

This sequence belongs to the TRAFAC class translation factor GTPase superfamily. Classic translation factor GTPase family. LepA subfamily.

It localises to the cell membrane. The enzyme catalyses GTP + H2O = GDP + phosphate + H(+). Its function is as follows. Required for accurate and efficient protein synthesis under certain stress conditions. May act as a fidelity factor of the translation reaction, by catalyzing a one-codon backward translocation of tRNAs on improperly translocated ribosomes. Back-translocation proceeds from a post-translocation (POST) complex to a pre-translocation (PRE) complex, thus giving elongation factor G a second chance to translocate the tRNAs correctly. Binds to ribosomes in a GTP-dependent manner. The polypeptide is Elongation factor 4 (Bacillus cereus (strain ATCC 10987 / NRS 248)).